A 373-amino-acid polypeptide reads, in one-letter code: XK-related protein 9 (373 aa).

Transmembrane regions (helical) follow at residues 8–28 (FMMS…DIVL), 38–58 (YVLG…VHCF), 166–186 (MVIM…QIAL), 206–226 (LFYK…LLFV), 230–250 (VALL…FINH), 256–276 (SVSM…FTFF), 295–315 (VLGT…IFNS), and 318–338 (FIPI…FLGV).

Belongs to the XK family. Undergoes proteolytic processing by caspase-3 (CASP3), caspase-6 (CASP6) and caspase-7 (CASP7) to generate the XK-related protein 9, processed form, leading to its activation. Highly expressed in the small intestines; weakly expressed in the pancreas, liver, stomach, and large intestines.

The protein resides in the cell membrane. It catalyses the reaction a 1,2-diacyl-sn-glycero-3-phospho-L-serine(in) = a 1,2-diacyl-sn-glycero-3-phospho-L-serine(out). Activated upon caspase cleavage to generate the XK-related protein 9, processed form. Does not act prior the onset of apoptosis. Phospholipid scramblase that promotes phosphatidylserine exposure on apoptotic cell surface. Phosphatidylserine is a specific marker only present at the surface of apoptotic cells and acts as a specific signal for engulfment. In Mus musculus (Mouse), this protein is XK-related protein 9.